Reading from the N-terminus, the 136-residue chain is Small ribosomal subunit protein uS12 (136 aa).

D89 is modified (3-methylthioaspartic acid). The segment at 101 to 136 is disordered; the sequence is SLDTSGVADRKQSRSKYGAKQPKAGVPAPVKGKGKR.

It belongs to the universal ribosomal protein uS12 family. As to quaternary structure, part of the 30S ribosomal subunit. Contacts proteins S8 and S17. May interact with IF1 in the 30S initiation complex.

In terms of biological role, with S4 and S5 plays an important role in translational accuracy. Functionally, interacts with and stabilizes bases of the 16S rRNA that are involved in tRNA selection in the A site and with the mRNA backbone. Located at the interface of the 30S and 50S subunits, it traverses the body of the 30S subunit contacting proteins on the other side and probably holding the rRNA structure together. The combined cluster of proteins S8, S12 and S17 appears to hold together the shoulder and platform of the 30S subunit. This Pelodictyon phaeoclathratiforme (strain DSM 5477 / BU-1) protein is Small ribosomal subunit protein uS12.